A 282-amino-acid chain; its full sequence is tRNA uridine(34) hydroxylase (282 aa).

One can recognise a Rhodanese domain in the interval 128–222; it reads DGRPVVMLDT…YFEEVGGSHY (95 aa). Cysteine 182 acts as the Cysteine persulfide intermediate in catalysis.

This sequence belongs to the TrhO family.

It catalyses the reaction uridine(34) in tRNA + AH2 + O2 = 5-hydroxyuridine(34) in tRNA + A + H2O. Functionally, catalyzes oxygen-dependent 5-hydroxyuridine (ho5U) modification at position 34 in tRNAs. The polypeptide is tRNA uridine(34) hydroxylase (Cupriavidus metallidurans (strain ATCC 43123 / DSM 2839 / NBRC 102507 / CH34) (Ralstonia metallidurans)).